A 562-amino-acid chain; its full sequence is Potassium voltage-gated channel subfamily V member 2 (562 aa).

A compositionally biased stretch (basic and acidic residues) spans 1-10 (MLKQSNERRW). Residues 1–34 (MLKQSNERRWSLSYKPWSTPETEDVPNTGSNQHR) form a disordered region. Residues 1–163 (MLKQSNERRW…TDEYFFDRDP (163 aa)) are Cytoplasmic-facing. The helical transmembrane segment at 164 to 184 (AVFQLIYNFYTSGVLLVRDEL) threads the bilayer. Topologically, residues 185–269 (CPRSFLEELG…KPFSSVAAKA (85 aa)) are extracellular. A helical membrane pass occupies residues 270-290 (MGVATNLFVLISVVALALNTV). Topologically, residues 291–344 (EEMQHQAEQGTGGGDPRPILEHVEMLCVAFFTLEFLLRLASTPNLQRFARSALN) are cytoplasmic. The helical transmembrane segment at 345–365 (LVDLVAILPFYLQLLLECFTS) threads the bilayer. At 366 to 391 (EDQRHNKDSPREHDLETVGRVGKVGQ) the chain is on the extracellular side. The helical; Voltage-sensor transmembrane segment at 392–412 (VLRIMRLMRIFRILKLARHST) threads the bilayer. Topologically, residues 413–427 (GLRAFGFTLRQCYQQ) are cytoplasmic. A helical membrane pass occupies residues 428 to 448 (VGCLMLFITMGIFSFSAAVYS). Topologically, residues 449-461 (VEHDVPGTNFTSI) are extracellular. N457 carries an N-linked (GlcNAc...) asparagine glycan. Residues 462–482 (LHAWWWAAVSISTVGYGDMYP) constitute an intramembrane region (pore-forming). The short motif at 474 to 479 (TVGYGD) is the Selectivity filter element. The Extracellular portion of the chain corresponds to 483 to 488 (ETHLGR). The chain crosses the membrane as a helical span at residues 489–509 (LFAFLCIAFGIILNGMPISIL). The Cytoplasmic segment spans residues 510–562 (YNKFSDYYSKLKAYEYTAIRRERGKVNFMQRATKKMAECLSESHAQSTTRQEN).

The protein belongs to the potassium channel family. V (TC 1.A.1.2) subfamily. Kv8.2/KCNV2 sub-subfamily. As to quaternary structure, heteromultimer with KCNB1, KCNC1 and KCNF1. Does not form homomultimers.

Its subcellular location is the cell membrane. Functionally, potassium channel subunit. Modulates channel activity by shifting the threshold and the half-maximal activation to more negative values. This chain is Potassium voltage-gated channel subfamily V member 2 (Kcnv2), found in Mus musculus (Mouse).